The following is a 473-amino-acid chain: H(+)/Cl(-) exchange transporter ClcA (473 aa).

The Cytoplasmic portion of the chain corresponds to 1-32 (MKTDTPSLETPQAARLRRRQLIRQLLERDKTP). A helical transmembrane segment spans residues 33–69 (LAILFMAAVVGTLVGLAAVAFDKGVAWLQNQRMGALV). Topologically, residues 70–76 (HTADNYP) are periplasmic. Residues 77–100 (LLLTVAFLCSAVLAMFGYFLVRKY) traverse the membrane as a helical segment. A Selectivity filter part_1 motif is present at residues 106 to 110 (GSGIP). Serine 107 serves as a coordination point for chloride. The helical intramembrane region spans 109–116 (IPEIEGAL). The Cytoplasmic portion of the chain corresponds to 117 to 123 (EDQRPVR). Helical transmembrane passes span 124–141 (WWRVLPVKFFGGLGTLGG) and 148–166 (EGPTVQIGGNIGRMVLDVF). A Selectivity filter part_2 motif is present at residues 146–150 (GREGP). Residues 167–176 (RLKGDEARHT) lie on the Cytoplasmic side of the membrane. Intramembrane regions (helical) lie at residues 177 to 189 (LLATGAAAGLAAA) and 193 to 201 (PLAGILFII). Over 202–214 (EEMRPQFRYTLIS) the chain is Cytoplasmic. The helical transmembrane segment at 215-232 (IKAVFIGVIMSTIMYRIF) threads the bilayer. The Periplasmic segment spans residues 233–252 (NHEVALIDVGKLSDAPLNTL). Residues 253–281 (WLYLILGIIFGIFGPIFNKWVLGMQDLLH) traverse the membrane as a helical segment. The Cytoplasmic portion of the chain corresponds to 282–287 (RVHGGN). A helical membrane pass occupies residues 288 to 309 (ITKWVLMGGAIGGLCGLLGFVA). Over 310–329 (PATSGGGFNLIPIATAGNFS) the chain is Periplasmic. Helical transmembrane passes span 330-349 (MGMLVFIFVARVITTLLCFS) and 355-376 (GIFAPMLALGTVLGTAFGMVAV). The Selectivity filter part_3 signature appears at 355–359 (GIFAP). The chloride site is built by isoleucine 356 and phenylalanine 357. Over 377–386 (ELFPQYHLEA) the chain is Periplasmic. Residues 387–401 (GTFAIAGMGALLAAS) constitute an intramembrane region (helical). The segment at residues 402 to 404 (IRA) is an intramembrane region (note=Loop between two helices). An intramembrane region (helical) is located at residues 405–416 (PLTGIILVLEMT). An intramembrane region (note=Loop between two helices) is located at residues 417–421 (DNYQL). The chain crosses the membrane as a helical span at residues 422-438 (ILPMIITGLGATLLAQF). Residues 439-473 (TGGKPLYSAILARTLAKQEAEQLARSKAASASENT) lie on the Cytoplasmic side of the membrane. Position 445 (tyrosine 445) interacts with chloride.

It belongs to the chloride channel (TC 2.A.49) family. ClcA subfamily. In terms of assembly, homodimer.

The protein resides in the cell inner membrane. The catalysed reaction is 2 chloride(in) + H(+)(out) = 2 chloride(out) + H(+)(in). Proton-coupled chloride transporter. Functions as antiport system and exchanges two chloride ions for 1 proton. Probably acts as an electrical shunt for an outwardly-directed proton pump that is linked to amino acid decarboxylation, as part of the extreme acid resistance (XAR) response. This chain is H(+)/Cl(-) exchange transporter ClcA, found in Escherichia coli O157:H7.